A 142-amino-acid chain; its full sequence is Ornithine decarboxylase antizyme (142 aa).

The segment covering 1–19 (MSSSIVLSNNNSNSNSMSM) has biased composition (low complexity). Positions 1-34 (MSSSIVLSNNNSNSNSMSMIGQSPPCCSDVPNTP) are disordered.

The protein belongs to the ODC antizyme family. Interacts with ODC1 and thereby sterically blocks ODC homodimerization.

Functionally, ornithine decarboxylase (ODC) antizyme protein that negatively regulates ODC activity and intracellular polyamine biosynthesis and uptake in response to increased intracellular polyamine levels. Binds to ODC monomers, inhibiting the assembly of the functional ODC homodimer, and targets the monomers for ubiquitin-independent proteolytic destruction by the 26S proteasome. The sequence is that of Ornithine decarboxylase antizyme from Pristionchus pacificus (Parasitic nematode).